Here is a 333-residue protein sequence, read N- to C-terminus: 4-hydroxyproline epimerase (333 aa).

The Proton acceptor role is filled by Cys-90. Substrate-binding positions include 91-92 and Asp-249; that span reads GH. The active-site Proton donor is the Cys-253. 254 to 255 contributes to the substrate binding site; that stretch reads GT.

It belongs to the proline racemase family. As to quaternary structure, homodimer.

The enzyme catalyses trans-4-hydroxy-L-proline = cis-4-hydroxy-D-proline. In terms of biological role, allows intracellular utilization of 4-hydroxyproline, one of the major constituents of host collagen, by converting 4-hydroxy-L-proline to 4-hydroxy-D-proline, which can be further metabolized by intracellular 4-hydroxy-D-proline oxidases. Strong B-cell mitogen. Plays an important role in the regulation of intra- and extracellular amino acid pools, allowing the bacterium to profit from host precursors and enzymatic pathways. This chain is 4-hydroxyproline epimerase, found in Brucella suis (strain ATCC 23445 / NCTC 10510).